The primary structure comprises 854 residues: Protein ROOT HAIR DEFECTIVE 3 homolog 1 (854 aa).

Residues 1–680 (MDEAAAAEAV…QAHKRGNGRL (680 aa)) lie on the Cytoplasmic side of the membrane. Residues 37–252 (GLSYAVVSIM…IAPGGLAGDR (216 aa)) enclose the GB1/RHD3-type G domain. GTP is bound at residue 47–54 (GPQSSGKS). A coiled-coil region spans residues 217–242 (ALPSFEEKEEQFREQVQQLRQRFSNS). The helical transmembrane segment at 681 to 701 (PPPWAMVAIAVLGFNEIMTLL) threads the bilayer. Topologically, residues 702 to 704 (RNP) are lumenal. Residues 705–725 (IYLFLLFVGYLLVKALAVQLD) form a helical membrane-spanning segment. Topologically, residues 726 to 854 (INREFQNGVV…NESNNAYSIV (129 aa)) are cytoplasmic. Composition is skewed to low complexity over residues 758-781 (TEQQQQQGHHQDAAAEAPQQQQQP) and 814-828 (VSPSPSSSSSTVTSP). The tract at residues 758–854 (TEQQQQQGHH…NESNNAYSIV (97 aa)) is disordered. Residues 842-854 (QPDNESNNAYSIV) show a composition bias toward polar residues.

It belongs to the TRAFAC class dynamin-like GTPase superfamily. GB1/RHD3 GTPase family. RHD3 subfamily.

The protein localises to the endoplasmic reticulum membrane. Functionally, probable GTP-binding protein that may be involved in cell development. The chain is Protein ROOT HAIR DEFECTIVE 3 homolog 1 from Oryza sativa subsp. japonica (Rice).